The chain runs to 739 residues: NAD(P)H-quinone oxidoreductase subunit 5, chloroplastic (739 aa).

The next 16 helical transmembrane spans lie at 9–29, 40–60, 89–109, 125–145, 147–167, 185–205, 219–239, 258–278, 286–306, 327–347, 354–374, 396–416, 425–445, 543–563, 602–622, and 717–737; these read WIIPFIPLPVPMLIGAGLILF, WAFQSVLLLSIVMIFSIYLSI, IDPLTSIMSILITTVGIMVLI, FAYMSFFSTSMLGLVTSSNLI, IYIFWELVGLCSYLLIGFWFT, GDFGLLLGILGFYWITGSFEF, NEVNFLFVTLCAVLLFAGAVA, TPISALIHAATMVAAGIFLVA, VIPYIMYLISVIGIITVLLGA, LGYMMLALGMGSYRSALFHLI, ALLFLGSGSIIHSMETIVGYS, ITFLLGTLSLCGIPPLACFWS, WLYSPIFAIIAWATAGLTAFY, LFPIFVLGLFTLFVGAIGIPF, VVSVSIAYFGIFIASFLYKPI, and SYLFLYLAYVSVFLLVYYLLF.

This sequence belongs to the complex I subunit 5 family. As to quaternary structure, NDH is composed of at least 16 different subunits, 5 of which are encoded in the nucleus.

The protein localises to the plastid. Its subcellular location is the chloroplast thylakoid membrane. It catalyses the reaction a plastoquinone + NADH + (n+1) H(+)(in) = a plastoquinol + NAD(+) + n H(+)(out). It carries out the reaction a plastoquinone + NADPH + (n+1) H(+)(in) = a plastoquinol + NADP(+) + n H(+)(out). In terms of biological role, NDH shuttles electrons from NAD(P)H:plastoquinone, via FMN and iron-sulfur (Fe-S) centers, to quinones in the photosynthetic chain and possibly in a chloroplast respiratory chain. The immediate electron acceptor for the enzyme in this species is believed to be plastoquinone. Couples the redox reaction to proton translocation, and thus conserves the redox energy in a proton gradient. The sequence is that of NAD(P)H-quinone oxidoreductase subunit 5, chloroplastic (ndhF) from Solanum tuberosum (Potato).